A 273-amino-acid polypeptide reads, in one-letter code: 2,3,4,5-tetrahydropyridine-2,6-dicarboxylate N-succinyltransferase (273 aa).

Residues Arg104 and Asp141 each coordinate substrate.

It belongs to the transferase hexapeptide repeat family. Homotrimer.

The protein localises to the cytoplasm. The catalysed reaction is (S)-2,3,4,5-tetrahydrodipicolinate + succinyl-CoA + H2O = (S)-2-succinylamino-6-oxoheptanedioate + CoA. Its pathway is amino-acid biosynthesis; L-lysine biosynthesis via DAP pathway; LL-2,6-diaminopimelate from (S)-tetrahydrodipicolinate (succinylase route): step 1/3. The chain is 2,3,4,5-tetrahydropyridine-2,6-dicarboxylate N-succinyltransferase from Nitrosomonas europaea (strain ATCC 19718 / CIP 103999 / KCTC 2705 / NBRC 14298).